The sequence spans 417 residues: Aminoacyltransferase FemB (417 aa).

It belongs to the FemABX family.

The protein localises to the cytoplasm. The catalysed reaction is MurNAc-L-Ala-D-isoglutaminyl-L-Lys-(N(6)-tri-Gly)-D-Ala-D-Ala-diphospho-di-trans,octa-cis-undecaprenyl-GlcNAc + 2 glycyl-tRNA(Gly) = MurNAc-L-Ala-D-isoglutaminyl-L-Lys-(N(6)-penta-Gly)-D-Ala-D-Ala-diphospho-di-trans,octa-cis-undecaprenyl-GlcNAc + 2 tRNA(Gly) + 2 H(+). Functionally, catalyzes the incorporation of amino acid(s) into the interchain peptide bridge of peptidoglycan, using aminoacyl-tRNA as amino acid donor. The sequence is that of Aminoacyltransferase FemB (femB) from Staphylococcus epidermidis (strain ATCC 35984 / DSM 28319 / BCRC 17069 / CCUG 31568 / BM 3577 / RP62A).